The chain runs to 106 residues: uncharacterized protein (106 aa).

This sequence belongs to the csb family.

This is an uncharacterized protein from Dictyostelium discoideum (Social amoeba).